A 316-amino-acid chain; its full sequence is uncharacterized protein (316 aa).

The Cytoplasmic portion of the chain corresponds to 1-70 (SFAYSGNSES…NNDEIGIWNY (70 aa)). Residues 71 to 91 (ISVAEMGGVLLFLSYWIWTCL) form a helical membrane-spanning segment. Position 92 (H92) is a topological domain, lumenal. The helical transmembrane segment at 93-113 (FSKIIFPAQKVICLYIFLFAL) threads the bilayer. Residues 114–170 (NQTLQECIEEYVFSSECIKYRQFYSVYEIIDFLRTNFYRLFVIYCALGFGITRTVPK) lie on the Cytoplasmic side of the membrane. Residues 171–191 (YLMIKGISIVIALCSVYWISL) form a helical membrane-spanning segment. Over 192–194 (YKD) the chain is Lumenal. The chain crosses the membrane as a helical span at residues 195–215 (VYVVSEIFDMIQYEVSPAIWV). Residues 216 to 245 (YSICHLLKQCTSVTTYENASKARFFRRMLN) lie on the Cytoplasmic side of the membrane. A helical membrane pass occupies residues 246–266 (AFIFIFCASPMLHYLSNIIFG). At 267–316 (NFDYRLSVIIGDLFTFMEKIAFPCYIMFPTHNEALAYNRNVAEEAQEKMI) the chain is on the lumenal side.

The protein belongs to the UPF0742 family.

Its subcellular location is the endoplasmic reticulum. The protein localises to the membrane. This is an uncharacterized protein from Schizosaccharomyces pombe (strain 972 / ATCC 24843) (Fission yeast).